Consider the following 268-residue polypeptide: Type III pantothenate kinase (268 aa).

6–13 provides a ligand contact to ATP; the sequence is DVGNTNIV. Substrate contacts are provided by residues Y100 and 107–110; that span reads GADR. The active-site Proton acceptor is the D109. D129 contributes to the K(+) binding site. T132 contacts ATP. Residue T184 coordinates substrate.

Belongs to the type III pantothenate kinase family. As to quaternary structure, homodimer. Requires NH4(+) as cofactor. K(+) is required as a cofactor.

The protein resides in the cytoplasm. It catalyses the reaction (R)-pantothenate + ATP = (R)-4'-phosphopantothenate + ADP + H(+). Its pathway is cofactor biosynthesis; coenzyme A biosynthesis; CoA from (R)-pantothenate: step 1/5. Functionally, catalyzes the phosphorylation of pantothenate (Pan), the first step in CoA biosynthesis. This Alkaliphilus metalliredigens (strain QYMF) protein is Type III pantothenate kinase.